The following is a 316-amino-acid chain: 4-hydroxy-3-methylbut-2-enyl diphosphate reductase (316 aa).

A [4Fe-4S] cluster-binding site is contributed by C12. The (2E)-4-hydroxy-3-methylbut-2-enyl diphosphate site is built by H41 and H74. Residues H41 and H74 each coordinate dimethylallyl diphosphate. Isopentenyl diphosphate contacts are provided by H41 and H74. A [4Fe-4S] cluster-binding site is contributed by C96. A (2E)-4-hydroxy-3-methylbut-2-enyl diphosphate-binding site is contributed by H124. H124 is a dimethylallyl diphosphate binding site. H124 serves as a coordination point for isopentenyl diphosphate. The active-site Proton donor is the E126. A (2E)-4-hydroxy-3-methylbut-2-enyl diphosphate-binding site is contributed by T169. C199 provides a ligand contact to [4Fe-4S] cluster. (2E)-4-hydroxy-3-methylbut-2-enyl diphosphate contacts are provided by S227, S228, N229, and S271. Dimethylallyl diphosphate contacts are provided by S227, S228, N229, and S271. S227, S228, N229, and S271 together coordinate isopentenyl diphosphate.

The protein belongs to the IspH family. The cofactor is [4Fe-4S] cluster.

The enzyme catalyses isopentenyl diphosphate + 2 oxidized [2Fe-2S]-[ferredoxin] + H2O = (2E)-4-hydroxy-3-methylbut-2-enyl diphosphate + 2 reduced [2Fe-2S]-[ferredoxin] + 2 H(+). It catalyses the reaction dimethylallyl diphosphate + 2 oxidized [2Fe-2S]-[ferredoxin] + H2O = (2E)-4-hydroxy-3-methylbut-2-enyl diphosphate + 2 reduced [2Fe-2S]-[ferredoxin] + 2 H(+). It functions in the pathway isoprenoid biosynthesis; dimethylallyl diphosphate biosynthesis; dimethylallyl diphosphate from (2E)-4-hydroxy-3-methylbutenyl diphosphate: step 1/1. Its pathway is isoprenoid biosynthesis; isopentenyl diphosphate biosynthesis via DXP pathway; isopentenyl diphosphate from 1-deoxy-D-xylulose 5-phosphate: step 6/6. Its function is as follows. Catalyzes the conversion of 1-hydroxy-2-methyl-2-(E)-butenyl 4-diphosphate (HMBPP) into a mixture of isopentenyl diphosphate (IPP) and dimethylallyl diphosphate (DMAPP). Acts in the terminal step of the DOXP/MEP pathway for isoprenoid precursor biosynthesis. In Xanthomonas campestris pv. campestris (strain 8004), this protein is 4-hydroxy-3-methylbut-2-enyl diphosphate reductase.